Consider the following 99-residue polypeptide: NADH-quinone oxidoreductase subunit K (99 aa).

The next 3 membrane-spanning stretches (helical) occupy residues 3–23, 28–48, and 59–79; these read PDNYLHLSALLFTIGAAGVLL, IVVFMCVELMLNAANLAFVAF, and VVAFFTMVVAACEVVIGLAII.

Belongs to the complex I subunit 4L family. NDH-1 is composed of 14 different subunits. Subunits NuoA, H, J, K, L, M, N constitute the membrane sector of the complex.

Its subcellular location is the cell membrane. It carries out the reaction a quinone + NADH + 5 H(+)(in) = a quinol + NAD(+) + 4 H(+)(out). NDH-1 shuttles electrons from NADH, via FMN and iron-sulfur (Fe-S) centers, to quinones in the respiratory chain. The immediate electron acceptor for the enzyme in this species is believed to be a menaquinone. Couples the redox reaction to proton translocation (for every two electrons transferred, four hydrogen ions are translocated across the cytoplasmic membrane), and thus conserves the redox energy in a proton gradient. The chain is NADH-quinone oxidoreductase subunit K from Mycobacterium sp. (strain KMS).